The primary structure comprises 524 residues: Fusicoccadiene C-8 hydroxylase (524 aa).

The chain crosses the membrane as a helical span at residues 16-36 (LQLLCIGPLVYACVSFIIKIV). N-linked (GlcNAc...) asparagine glycosylation is found at N126 and N344. C465 is a binding site for heme. N496 carries N-linked (GlcNAc...) asparagine glycosylation.

The protein belongs to the cytochrome P450 family. Heme serves as cofactor.

The protein localises to the membrane. The protein operates within mycotoxin biosynthesis. Functionally, cytochrome P450 monooxygenase; part of the 2 gene clusters that mediate the biosynthesis of fusicoccins, diterpene glucosides that display phytohormone-like activity and function as potent activators of plasma membrane H(+)-ATPases in plants by modifying 14-3-3 proteins and cause the plant disease constriction canker. The first step in the pathway is performed by the fusicoccadiene synthase PaFS that possesses both prenyl transferase and terpene cyclase activity, converting isopentenyl diphosphate and dimethylallyl diphosphate into geranylgeranyl diphosphate (GGDP) and successively converting GGDP into fusicocca-2,10(14)-diene, a precursor for fusicoccin H. The second step is the oxidation at the C-8 position by the cytochrome P450 monooxygenase PaP450-2 to yield fusicocca-2,10(14)-diene-8-beta-ol. The cytochrome P450 monooxygenase PaP450-1 then catalyzes the hydroxylation at the C-16 position to produce fusicocca-2,10(14)-diene-8-beta,16-diol. The dioxygenase fc-dox then catalyzes the 16-oxydation of fusicocca-2,10(14)-diene-8-beta,16-diol to yield an aldehyde (8-beta-hydroxyfusicocca-1,10(14)-dien-16-al). The short-chain dehydrogenase/reductase fc-sdr catalyzes the reduction of the aldehyde to yield fusicocca-1,10(14)-diene-8-beta,16-diol. The next step is the hydroxylation at C-9 performed by the cytochrome P450 monooxygenase PaP450-3 that leads to fusicoccin H aglycon which is glycosylated to fusicoccin H by the O-glycosyltransferase PaGT. Hydroxylation at C-12 by the cytochrome P450 monooxygenase PaP450-4 leads then to the production of fusicoccin Q and is followed by methylation by the O-methyltransferase PaMT to yield fusicoccin P. Fusicoccin P is further converted to fusicoccin J via prenylation by the O-glucose prenyltransferase PaPT. Cytochrome P450 monooxygenase PaP450-5 then performs hydroxylation at C-19 to yield dideacetyl-fusicoccin A which is acetylated to 3'-O-deacetyl-fusicoccin A by the O-acetyltransferase PaAT-2. Finally, a another acetylation by the O-acetyltransferase PaAT-1 yields fusicoccin A. The chain is Fusicoccadiene C-8 hydroxylase from Phomopsis amygdali (Fusicoccum amygdali).